A 158-amino-acid polypeptide reads, in one-letter code: Transcription elongation factor GreA (158 aa).

The stretch at 49 to 73 (QAAREQQGFIEGRIKEIEAKLANAQ) forms a coiled coil.

This sequence belongs to the GreA/GreB family.

Functionally, necessary for efficient RNA polymerase transcription elongation past template-encoded arresting sites. The arresting sites in DNA have the property of trapping a certain fraction of elongating RNA polymerases that pass through, resulting in locked ternary complexes. Cleavage of the nascent transcript by cleavage factors such as GreA or GreB allows the resumption of elongation from the new 3'terminus. GreA releases sequences of 2 to 3 nucleotides. This is Transcription elongation factor GreA from Methylococcus capsulatus (strain ATCC 33009 / NCIMB 11132 / Bath).